The primary structure comprises 325 residues: 2-oxoglutarate-dependent dioxygenase tropC (325 aa).

In terms of domain architecture, Fe2OG dioxygenase spans 185–287 (PSIPMRLLHY…RYSVAFFLNG (103 aa)). Residues histidine 210, aspartate 212, and histidine 269 each contribute to the Fe cation site. Arginine 278 provides a ligand contact to 2-oxoglutarate.

Belongs to the iron/ascorbate-dependent oxidoreductase family. The cofactor is Fe(2+).

It functions in the pathway secondary metabolite biosynthesis. Its function is as follows. 2-oxoglutarate-dependent dioxygenase; part of the gene cluster that mediates the biosynthesis of the tropolone class of fungal maleic anhydrides. The pathway begins with the synthesis of 3-methylorcinaldehyde by the non-reducing polyketide synthase (PKS) tropA. 3-methylorcinaldehyde is the substrate for the FAD-dependent monooxygenase tropB to yield a dearomatized hydroxycyclohexadione. The 2-oxoglutarate-dependent dioxygenase tropC then performs the oxidative ring expansion to provide the first tropolone metabolite stipitaldehyde. Trop D converts stipitaldehyde into stipitacetal which is in turn converted to stipitalide by the short-chain dehydrogenase/reductase tropE. The next steps involve tropF, tropG, tropH, tropI and tropJ to form successive tropolone maleic anhydrides including stipitaldehydic, stipitatonic and stipitatic acids. The polypeptide is 2-oxoglutarate-dependent dioxygenase tropC (Talaromyces stipitatus (strain ATCC 10500 / CBS 375.48 / QM 6759 / NRRL 1006) (Penicillium stipitatum)).